The sequence spans 440 residues: MSRRDVVLTNVTVVQLRRDRCPCPCPCPCPCPCPVIRPPPPKLEDPPPTVEEQPPPPPPPPPPPPPPPPPPPPQIEPDKFEEAPPPPPPPPPPPPPPPPPLQKPARELTVGINGFGRIGRLVLRVCMEKGIRVVAVNDPFIDPEYMVYMFKYDSTHGRYKGNVEHKNGQLVVDNLEINTYQCKDPKEIPWSSIGNPYVVECTGVYLSIEAASAHISSGARRVVVTAPSPDAPMFVMGVNEKDYNPGSMTIVSNASCTTNCLAPLAKVIHENFGIVEGLMTTVHSYTATQKTVDGPSKKDWRGGRGAHQNIIPSSTGAAKAVGKVIPELKGKLTGMAFRVPTPNVSVVDLTCRLAKPASYSAITEAVKAAAKGPLAGILAYTEDQVVSTDFNGNPHSSIFDAKAGIALNDNFVKLVAWYDNEYGYSNRVVDLLRYMFSREK.

The segment at 1–105 (MSRRDVVLTN…PPPPPLQKPA (105 aa)) is testis-specific N-terminal extension. 2 stretches are compositionally biased toward pro residues: residues 40 to 75 (PPKLEDPPPTVEEQPPPPPPPPPPPPPPPPPPPPQI) and 83 to 102 (APPPPPPPPPPPPPPPPPLQ). The disordered stretch occupies residues 40–106 (PPKLEDPPPT…PPPPLQKPAR (67 aa)). NAD(+) is bound by residues 117–118 (RI), Asp138, Lys183, Tyr205, and Thr225. D-glyceraldehyde 3-phosphate-binding positions include 255–257 (SCT), Thr286, 315–316 (TG), and Arg338. The active-site Nucleophile is the Cys256. Ser358 is subject to Phosphoserine. Asn420 contacts NAD(+).

The protein belongs to the glyceraldehyde-3-phosphate dehydrogenase family. Homotetramer. Testis specific.

The protein resides in the cytoplasm. It carries out the reaction D-glyceraldehyde 3-phosphate + phosphate + NAD(+) = (2R)-3-phospho-glyceroyl phosphate + NADH + H(+). It functions in the pathway carbohydrate degradation; glycolysis; pyruvate from D-glyceraldehyde 3-phosphate: step 1/5. May play an important role in regulating the switch between different pathways for energy production during spermiogenesis and in the spermatozoon. Required for sperm motility and male fertility. This Mus musculus (Mouse) protein is Glyceraldehyde-3-phosphate dehydrogenase, testis-specific (Gapdhs).